We begin with the raw amino-acid sequence, 98 residues long: MTLFSSISSMSSSMTSSRSSFSSFGSGTSMGSNSIACSVGSGGGGCGSGSGGCGDLTGGAKSSGGSCGGKGGPHNHGHGNGHGPHGHGGKGSGGSCSC.

2 disordered regions span residues Met1–Ser29 and Ala60–Cys98. The span at Ala60–Gly72 shows a compositional bias: gly residues. Positions Pro73–Gly88 are enriched in basic residues. Positions Gly89–Cys98 are enriched in gly residues.

This sequence belongs to the hssA/B family.

This chain is HssA/B-like protein 33 (hssl33), found in Dictyostelium discoideum (Social amoeba).